We begin with the raw amino-acid sequence, 400 residues long: Tryptophan synthase beta chain (400 aa).

Lysine 92 carries the N6-(pyridoxal phosphate)lysine modification.

Belongs to the TrpB family. In terms of assembly, tetramer of two alpha and two beta chains. Pyridoxal 5'-phosphate is required as a cofactor.

It carries out the reaction (1S,2R)-1-C-(indol-3-yl)glycerol 3-phosphate + L-serine = D-glyceraldehyde 3-phosphate + L-tryptophan + H2O. It participates in amino-acid biosynthesis; L-tryptophan biosynthesis; L-tryptophan from chorismate: step 5/5. Functionally, the beta subunit is responsible for the synthesis of L-tryptophan from indole and L-serine. The protein is Tryptophan synthase beta chain of Leptospira borgpetersenii serovar Hardjo-bovis (strain JB197).